A 389-amino-acid polypeptide reads, in one-letter code: Tryptophan synthase beta chain (389 aa).

An N6-(pyridoxal phosphate)lysine modification is found at Lys84.

This sequence belongs to the TrpB family. Tetramer of two alpha and two beta chains. The cofactor is pyridoxal 5'-phosphate.

The catalysed reaction is (1S,2R)-1-C-(indol-3-yl)glycerol 3-phosphate + L-serine = D-glyceraldehyde 3-phosphate + L-tryptophan + H2O. Its pathway is amino-acid biosynthesis; L-tryptophan biosynthesis; L-tryptophan from chorismate: step 5/5. In terms of biological role, the beta subunit is responsible for the synthesis of L-tryptophan from indole and L-serine. This chain is Tryptophan synthase beta chain, found in Clostridium novyi (strain NT).